A 229-amino-acid chain; its full sequence is Small ribosomal subunit protein uS3 (229 aa).

In terms of domain architecture, KH type-2 spans 39-107; sequence VRQYLTEKLK…TAQINIAEIR (69 aa).

It belongs to the universal ribosomal protein uS3 family. In terms of assembly, part of the 30S ribosomal subunit. Forms a tight complex with proteins S10 and S14.

Functionally, binds the lower part of the 30S subunit head. Binds mRNA in the 70S ribosome, positioning it for translation. This chain is Small ribosomal subunit protein uS3, found in Shewanella frigidimarina (strain NCIMB 400).